A 578-amino-acid chain; its full sequence is 2-succinyl-5-enolpyruvyl-6-hydroxy-3-cyclohexene-1-carboxylate synthase (578 aa).

It belongs to the TPP enzyme family. MenD subfamily. Homodimer. The cofactor is Mg(2+). Requires Mn(2+) as cofactor. Thiamine diphosphate is required as a cofactor.

It carries out the reaction isochorismate + 2-oxoglutarate + H(+) = 5-enolpyruvoyl-6-hydroxy-2-succinyl-cyclohex-3-ene-1-carboxylate + CO2. It participates in quinol/quinone metabolism; 1,4-dihydroxy-2-naphthoate biosynthesis; 1,4-dihydroxy-2-naphthoate from chorismate: step 2/7. The protein operates within quinol/quinone metabolism; menaquinone biosynthesis. Catalyzes the thiamine diphosphate-dependent decarboxylation of 2-oxoglutarate and the subsequent addition of the resulting succinic semialdehyde-thiamine pyrophosphate anion to isochorismate to yield 2-succinyl-5-enolpyruvyl-6-hydroxy-3-cyclohexene-1-carboxylate (SEPHCHC). In Prosthecochloris aestuarii (strain DSM 271 / SK 413), this protein is 2-succinyl-5-enolpyruvyl-6-hydroxy-3-cyclohexene-1-carboxylate synthase.